We begin with the raw amino-acid sequence, 223 residues long: Flagellar L-ring protein 2 (223 aa).

The N-terminal stretch at 1–17 (MKWLSKSWAVAVVLLVG) is a signal peptide. Residue Cys-18 is the site of N-palmitoyl cysteine attachment. Cys-18 is lipidated: S-diacylglycerol cysteine.

Belongs to the FlgH family. In terms of assembly, the basal body constitutes a major portion of the flagellar organelle and consists of four rings (L,P,S, and M) mounted on a central rod.

The protein localises to the cell outer membrane. Its subcellular location is the bacterial flagellum basal body. Assembles around the rod to form the L-ring and probably protects the motor/basal body from shearing forces during rotation. The sequence is that of Flagellar L-ring protein 2 from Vibrio parahaemolyticus serotype O3:K6 (strain RIMD 2210633).